Consider the following 396-residue polypeptide: Elongation factor Tu (396 aa).

The tr-type G domain maps to 11–205; sequence KPHVNIGTIG…VIDEYIPTPV (195 aa). The G1 stretch occupies residues 20 to 27; that stretch reads GHVDHGKT. 20–27 serves as a coordination point for GTP; it reads GHVDHGKT. T27 provides a ligand contact to Mg(2+). The tract at residues 61-65 is G2; it reads GITIN. The G3 stretch occupies residues 82 to 85; that stretch reads DAPG. GTP-binding positions include 82 to 86 and 137 to 140; these read DAPGH and NKTD. The segment at 137–140 is G4; it reads NKTD. The interval 175–177 is G5; sequence SAL.

This sequence belongs to the TRAFAC class translation factor GTPase superfamily. Classic translation factor GTPase family. EF-Tu/EF-1A subfamily. As to quaternary structure, monomer.

The protein resides in the cytoplasm. It carries out the reaction GTP + H2O = GDP + phosphate + H(+). Its function is as follows. GTP hydrolase that promotes the GTP-dependent binding of aminoacyl-tRNA to the A-site of ribosomes during protein biosynthesis. The protein is Elongation factor Tu of Oenococcus oeni (strain ATCC BAA-331 / PSU-1).